A 229-amino-acid polypeptide reads, in one-letter code: Large ribosomal subunit protein uL4 (229 aa).

The interval 62-103 (SRRQGTHQVKNRAAVSGSGKKPWKQKGTGRARHSSRRSPIWV) is disordered. Positions 82–97 (KPWKQKGTGRARHSSR) are enriched in basic residues.

The protein belongs to the universal ribosomal protein uL4 family. In terms of assembly, part of the 50S ribosomal subunit.

In terms of biological role, one of the primary rRNA binding proteins, this protein initially binds near the 5'-end of the 23S rRNA. It is important during the early stages of 50S assembly. It makes multiple contacts with different domains of the 23S rRNA in the assembled 50S subunit and ribosome. Functionally, forms part of the polypeptide exit tunnel. In Mycoplasmopsis synoviae (strain 53) (Mycoplasma synoviae), this protein is Large ribosomal subunit protein uL4.